Here is a 358-residue protein sequence, read N- to C-terminus: UDP-N-acetylglucosamine--N-acetylmuramyl-(pentapeptide) pyrophosphoryl-undecaprenol N-acetylglucosamine transferase (358 aa).

UDP-N-acetyl-alpha-D-glucosamine-binding residues include S197 and Q288.

This sequence belongs to the glycosyltransferase 28 family. MurG subfamily.

The protein resides in the cell membrane. The catalysed reaction is Mur2Ac(oyl-L-Ala-gamma-D-Glu-L-Lys-D-Ala-D-Ala)-di-trans,octa-cis-undecaprenyl diphosphate + UDP-N-acetyl-alpha-D-glucosamine = beta-D-GlcNAc-(1-&gt;4)-Mur2Ac(oyl-L-Ala-gamma-D-Glu-L-Lys-D-Ala-D-Ala)-di-trans,octa-cis-undecaprenyl diphosphate + UDP + H(+). It functions in the pathway cell wall biogenesis; peptidoglycan biosynthesis. In terms of biological role, cell wall formation. Catalyzes the transfer of a GlcNAc subunit on undecaprenyl-pyrophosphoryl-MurNAc-pentapeptide (lipid intermediate I) to form undecaprenyl-pyrophosphoryl-MurNAc-(pentapeptide)GlcNAc (lipid intermediate II). This Streptococcus agalactiae serotype Ia (strain ATCC 27591 / A909 / CDC SS700) protein is UDP-N-acetylglucosamine--N-acetylmuramyl-(pentapeptide) pyrophosphoryl-undecaprenol N-acetylglucosamine transferase.